The chain runs to 894 residues: Septin and tuftelin-interacting protein 1 homolog (894 aa).

Disordered stretches follow at residues 71-149 (YEPN…DKPV) and 187-225 (NAGL…RSLG). Positions 73-84 (PNEHKLKNKDGE) are enriched in basic and acidic residues. Over residues 97–126 (KKKKKEKKEKKQKKKEKKEKKEKKNKKKNK) the composition is skewed to basic residues. In terms of domain architecture, G-patch spans 149-195 (VGGIGAALLSKMGYKGTGGLGRDGGGMVEPIKVQVRPKNAGLASVTE). Residues 202–217 (DDSDDSDQSEGDTDSD) show a composition bias toward acidic residues. Residues 329–449 (KQIDIQNQDN…SDNNDNSSLE (121 aa)) are a coiled coil. Residues 785–821 (NNNNNNNINNSYQQQNQQQPIKPISSPSLNSSNNNNI) form a disordered region.

It belongs to the TFP11/STIP family. In terms of assembly, identified in the spliceosome C complex.

Its subcellular location is the cytoplasm. It is found in the nucleus. May be involved in pre-mRNA splicing. The protein is Septin and tuftelin-interacting protein 1 homolog (stip-1) of Dictyostelium discoideum (Social amoeba).